A 382-amino-acid polypeptide reads, in one-letter code: Serine protease 43 (382 aa).

The signal sequence occupies residues 1-27 (MGGFCGADRGGFLALLVWLQLLQPLFS). The interval 30–97 (YKPREDSGVM…SGTTTKITLE (68 aa)) is disordered. 2 stretches are compositionally biased toward polar residues: residues 56-68 (AQQS…SISH) and 85-95 (GSPSGTTTKIT). The Peptidase S1 domain occupies 119-355 (VDPGSLSAGR…YNEWVSYVLS (237 aa)). C144 and C160 are joined by a disulfide. Residues H159 and D205 each act as charge relay system in the active site. Intrachain disulfides connect C239-C313, C272-C293, and C303-C331. S307 acts as the Charge relay system in catalysis. Residues 362 to 382 (PMGVLVLYLSLVFPLALLVAL) traverse the membrane as a helical segment.

This sequence belongs to the peptidase S1 family. Testis-specific. Expressed in germ cells at the stages from late pachytene spermatocytes to spermatids.

It is found in the cell membrane. Plays a role in spermatogenesis. Involved in germ cell survival during meiosis. Lacks protease activity in vitro. This is Serine protease 43 from Mus musculus (Mouse).